A 221-amino-acid polypeptide reads, in one-letter code: MSATESSSIFTLSHNSNLQDILAANAKWASQMNNIQPTLFPDHNAKGQSPHTLFIGCSDSRYNENCLGVLPGEVFTWKNVANICHSEDLTLKATLEFAIICLKVNKVIICGHTDCGGIKTCLTNQREALPKVNCSHLYKYLDDIDTMYHEESQNLIHLKTQREKSHYLSHCNVKRQFNRIIENPTVQTAVQNGELQVYGLLYNVEDGLLQTVSTYTKVTPK.

Residues Cys57, Asp59, His112, and Cys115 each coordinate Zn(2+).

It belongs to the beta-class carbonic anhydrase family. The cofactor is Zn(2+).

The protein resides in the cytoplasm. It localises to the nucleus. The protein localises to the mitochondrion intermembrane space. It carries out the reaction hydrogencarbonate + H(+) = CO2 + H2O. In terms of biological role, catalyzes the reversible hydration of CO(2) to H(2)CO(3). The main role may be to provide inorganic carbon for the bicarbonate-dependent carboxylation reactions catalyzed by pyruvate carboxylase, acetyl-CoA carboxylase and carbamoyl-phosphate synthetase. Involved in protection against oxidative damage. Encodes a substrate for the non-classical protein export pathway for proteins that lack a cleavable signal sequence. The protein is Carbonic anhydrase (NCE103) of Saccharomyces cerevisiae (strain ATCC 204508 / S288c) (Baker's yeast).